We begin with the raw amino-acid sequence, 854 residues long: Leucine--tRNA ligase (854 aa).

A disordered region spans residues 1–32 (MARRDMAAETMDPRASTEPSPNEPREPARYDH). Residues 23–32 (EPREPARYDH) are compositionally biased toward basic and acidic residues. The 'HIGH' region signature appears at 69-80 (PYPSGSGLHVGH). The short motif at 633–637 (KMSKS) is the 'KMSKS' region element. Lysine 636 serves as a coordination point for ATP.

Belongs to the class-I aminoacyl-tRNA synthetase family.

It is found in the cytoplasm. The catalysed reaction is tRNA(Leu) + L-leucine + ATP = L-leucyl-tRNA(Leu) + AMP + diphosphate. In Sorangium cellulosum (strain So ce56) (Polyangium cellulosum (strain So ce56)), this protein is Leucine--tRNA ligase.